The sequence spans 213 residues: RNA pyrophosphohydrolase (213 aa).

The Nudix hydrolase domain maps to 6 to 149 (GFRPNVGIVL…KRGVYEIALT (144 aa)). Positions 38 to 59 (GGIDRGETPEQAMIRELHEEVG) match the Nudix box motif. A disordered region spans residues 185-213 (NFELPPGGSFEPNPQTSYGLDASGKPHET).

Belongs to the Nudix hydrolase family. RppH subfamily. A divalent metal cation is required as a cofactor.

Its function is as follows. Accelerates the degradation of transcripts by removing pyrophosphate from the 5'-end of triphosphorylated RNA, leading to a more labile monophosphorylated state that can stimulate subsequent ribonuclease cleavage. The sequence is that of RNA pyrophosphohydrolase from Albidiferax ferrireducens (strain ATCC BAA-621 / DSM 15236 / T118) (Rhodoferax ferrireducens).